The following is a 207-amino-acid chain: Outer-membrane lipoprotein LolB (207 aa).

Residues 1-21 form the signal peptide; the sequence is MTLPDFRLIRLLPLASLVLTA. The N-palmitoyl cysteine moiety is linked to residue cysteine 22. A lipid anchor (S-diacylglycerol cysteine) is attached at cysteine 22.

Belongs to the LolB family. In terms of assembly, monomer.

The protein resides in the cell outer membrane. Plays a critical role in the incorporation of lipoproteins in the outer membrane after they are released by the LolA protein. This Salmonella schwarzengrund (strain CVM19633) protein is Outer-membrane lipoprotein LolB.